A 534-amino-acid chain; its full sequence is Inorganic phosphate transporter 1-4 (534 aa).

Residues 1 to 24 (MAREQLQVLNALDVAKTQWYHFTA) are Cytoplasmic-facing. The chain crosses the membrane as a helical span at residues 25 to 45 (IIIAGMGFFTDAYDLFCISLV). At 46 to 70 (TKLLGRIYYHVEGAQKPGTLPPNVA) the chain is on the extracellular side. The helical transmembrane segment at 71-91 (AAVNGVAFCGTLAGQLFFGWL) threads the bilayer. Residues 92 to 99 (GDKLGRKK) are Cytoplasmic-facing. The helical transmembrane segment at 100 to 120 (VYGMTLMVMVLCSIASGLSFG) threads the bilayer. The Extracellular segment spans residues 121 to 131 (HEPKAVMATLC). A helical membrane pass occupies residues 132–152 (FFRFWLGFGIGGDYPLSATIM). Topologically, residues 153–161 (SEYANKKTR) are cytoplasmic. Residues 162 to 182 (GAFVSAVFAMQGFGIMAGGIF) traverse the membrane as a helical segment. Over 183–211 (AIIISSAFEAKFPSPAYADDALGSTIPQA) the chain is Extracellular. The chain crosses the membrane as a helical span at residues 212–232 (DLVWRIILMAGAIPAAMTYYS). Residues 233-293 (RSKMPETARY…GLFSKEFMSR (61 aa)) are Cytoplasmic-facing. The helical transmembrane segment at 294 to 314 (HGLHLLGTTSTWFLLDIAFYS) threads the bilayer. The Extracellular segment spans residues 315 to 349 (QNLFQKDIFSAIGWIPPAQSMNAIQEVFKIARAQT). The chain crosses the membrane as a helical span at residues 350–370 (LIALCSTVPGYWFTVAFIDVI). Residues 371–372 (GR) lie on the Cytoplasmic side of the membrane. A helical membrane pass occupies residues 373 to 393 (FAIQMMGFFFMTVFMFALAIP). The Extracellular segment spans residues 394–403 (YNHWTHKENR). Residues 404-424 (IGFVIMYSLTFFFANFGPNAT) traverse the membrane as a helical segment. The Cytoplasmic segment spans residues 425–442 (TFVVPAEIFPARFRSTCH). A helical transmembrane segment spans residues 443 to 463 (GISAASGKLGAMVGAFGFLYL). The Extracellular portion of the chain corresponds to 464–484 (AQNPDKDKTDAGYPPGIGVRN). The helical transmembrane segment at 485–505 (SLIVLGVVNFLGILFTFLVPE) threads the bilayer. The Cytoplasmic segment spans residues 506–534 (SKGKSLEEMSGENEDNENSNNDSRTVPIV). The segment at 512 to 534 (EEMSGENEDNENSNNDSRTVPIV) is disordered. A phosphoserine mark is found at Ser524 and Ser528.

It belongs to the major facilitator superfamily. Phosphate:H(+) symporter (TC 2.A.1.9) family. As to quaternary structure, interacts with NLA. Ubiquitinated by NLA. Ubiquitination of PHT1-4 leads to its degradation by the proteasome. In terms of tissue distribution, mostly expressed in roots, in tissues connecting the lateral roots to the primary root. Also present in flowers, in senescing anther filaments and in the abscission zone at the base of siliques. Expressed in hydathodes and axillary buds, and in some senescing leaves. After Pi starvation, localized in all cells of undifferentiated root segments, including root tips and root hairs, and in the epidermis, cortex and stellar regions of mature root segments.

The protein resides in the cell membrane. In terms of biological role, high-affinity transporter for external inorganic phosphate. Acts as a H(+):phosphate symporter in both low- and high-Pi conditions. Confers sensitivity to arsenate. The polypeptide is Inorganic phosphate transporter 1-4 (PHT1-4) (Arabidopsis thaliana (Mouse-ear cress)).